The primary structure comprises 207 residues: Uracil phosphoribosyltransferase (207 aa).

Residues Arg77, Arg102, and 129–137 (DPMLATGGS) each bind 5-phospho-alpha-D-ribose 1-diphosphate. Residues Ile192 and 197–199 (GDA) each bind uracil. Asp198 contributes to the 5-phospho-alpha-D-ribose 1-diphosphate binding site.

This sequence belongs to the UPRTase family. It depends on Mg(2+) as a cofactor.

The catalysed reaction is UMP + diphosphate = 5-phospho-alpha-D-ribose 1-diphosphate + uracil. It functions in the pathway pyrimidine metabolism; UMP biosynthesis via salvage pathway; UMP from uracil: step 1/1. Allosterically activated by GTP. Its function is as follows. Catalyzes the conversion of uracil and 5-phospho-alpha-D-ribose 1-diphosphate (PRPP) to UMP and diphosphate. The polypeptide is Uracil phosphoribosyltransferase (Dictyoglomus thermophilum (strain ATCC 35947 / DSM 3960 / H-6-12)).